Reading from the N-terminus, the 568-residue chain is Methyl-accepting chemotaxis protein CtpH (568 aa).

Residues 1-39 are Cytoplasmic-facing; that stretch reads MPASPGHRDVLGCLVAACVPVQPGNPSRRSMLQQSLRAQ. The helical transmembrane segment at 40–60 threads the bilayer; sequence ILVLLGGSLAALLLIALACFG. Residues 61-216 are Periplasmic-facing; it reads SLTGDVRAYR…ISAEARRTML (156 aa). Residues 217–237 form a helical membrane-spanning segment; that stretch reads LGSLVLIGASLAVALLSLWLV. Topologically, residues 238 to 568 are cytoplasmic; that stretch reads NRNLVRPVQR…LGDALQRLRA (331 aa). The 53-residue stretch at 239 to 291 folds into the HAMP domain; that stretch reads RNLVRPVQRLIEHIAQLSHGDFGERIEIRRKDELGKLALAANTLRDFLVDIFD. One can recognise a Methyl-accepting transducer domain in the interval 296 to 532; it reads STRDLDSASG…EISRNLTEIA (237 aa).

The protein belongs to the methyl-accepting chemotaxis (MCP) protein family.

It localises to the cell inner membrane. Its function is as follows. Chemotactic-signal transducers respond to changes in the concentration of attractants and repellents in the environment, transduce a signal from the outside to the inside of the cell, and facilitate sensory adaptation through the variation of the level of methylation. Chemoreceptor for inorganic phosphate, which is required for taxis at high concentrations of phosphate. Recognizes inorganic phosphate directly. Can also bind to other components that have a pyrophosphate group, including ATP and ADP. In Pseudomonas aeruginosa (strain ATCC 15692 / DSM 22644 / CIP 104116 / JCM 14847 / LMG 12228 / 1C / PRS 101 / PAO1), this protein is Methyl-accepting chemotaxis protein CtpH.